Here is a 143-residue protein sequence, read N- to C-terminus: FAM161 homolog famh-136 (143 aa).

Belongs to the FAM136 family.

The protein resides in the cytoplasm. May play a role in locomotion and behavior. This chain is FAM161 homolog famh-136, found in Caenorhabditis elegans.